A 368-amino-acid polypeptide reads, in one-letter code: Phosphoserine aminotransferase (368 aa).

Arginine 44 contributes to the L-glutamate binding site. Pyridoxal 5'-phosphate contacts are provided by residues 78–79 (AT), tryptophan 104, threonine 157, aspartate 179, and glutamine 202. Lysine 203 carries the N6-(pyridoxal phosphate)lysine modification. Pyridoxal 5'-phosphate is bound at residue 244–245 (NT).

Belongs to the class-V pyridoxal-phosphate-dependent aminotransferase family. SerC subfamily. As to quaternary structure, homodimer. The cofactor is pyridoxal 5'-phosphate.

The protein localises to the cytoplasm. The enzyme catalyses O-phospho-L-serine + 2-oxoglutarate = 3-phosphooxypyruvate + L-glutamate. The catalysed reaction is 4-(phosphooxy)-L-threonine + 2-oxoglutarate = (R)-3-hydroxy-2-oxo-4-phosphooxybutanoate + L-glutamate. It participates in amino-acid biosynthesis; L-serine biosynthesis; L-serine from 3-phospho-D-glycerate: step 2/3. The protein operates within cofactor biosynthesis; pyridoxine 5'-phosphate biosynthesis; pyridoxine 5'-phosphate from D-erythrose 4-phosphate: step 3/5. Functionally, catalyzes the reversible conversion of 3-phosphohydroxypyruvate to phosphoserine and of 3-hydroxy-2-oxo-4-phosphonooxybutanoate to phosphohydroxythreonine. This is Phosphoserine aminotransferase from Neisseria meningitidis serogroup B (strain ATCC BAA-335 / MC58).